A 278-amino-acid chain; its full sequence is Potassium/proton antiporter CemA (278 aa).

Helical transmembrane passes span 60–80 (YLVL…SLVF), 163–183 (ILAF…IAVL), 201–221 (FLII…GWEV), and 239–259 (IFLF…YWIF).

Belongs to the CemA family.

It is found in the plastid. It localises to the chloroplast inner membrane. It carries out the reaction K(+)(in) + H(+)(out) = K(+)(out) + H(+)(in). In terms of biological role, contributes to K(+)/H(+) antiport activity by supporting proton efflux to control proton extrusion and homeostasis in chloroplasts in a light-dependent manner to modulate photosynthesis. Prevents excessive induction of non-photochemical quenching (NPQ) under continuous-light conditions. Indirectly promotes efficient inorganic carbon uptake into chloroplasts. The chain is Potassium/proton antiporter CemA from Guillardia theta (Cryptophyte).